The primary structure comprises 181 residues: Large ribosomal subunit protein uL5 (181 aa).

The protein belongs to the universal ribosomal protein uL5 family. As to quaternary structure, part of the 50S ribosomal subunit; part of the 5S rRNA/L5/L18/L25 subcomplex. Contacts the 5S rRNA and the P site tRNA. Forms a bridge to the 30S subunit in the 70S ribosome.

This is one of the proteins that bind and probably mediate the attachment of the 5S RNA into the large ribosomal subunit, where it forms part of the central protuberance. In the 70S ribosome it contacts protein S13 of the 30S subunit (bridge B1b), connecting the 2 subunits; this bridge is implicated in subunit movement. Contacts the P site tRNA; the 5S rRNA and some of its associated proteins might help stabilize positioning of ribosome-bound tRNAs. This chain is Large ribosomal subunit protein uL5, found in Helicobacter pylori (strain G27).